The sequence spans 205 residues: Transcription termination/antitermination protein NusG (205 aa).

Residues 154–178 enclose the KOW domain; it reads GDHIMVLSGPFKDFEGDVIEVSPER.

Belongs to the NusG family.

Participates in transcription elongation, termination and antitermination. The polypeptide is Transcription termination/antitermination protein NusG (Synechocystis sp. (strain ATCC 27184 / PCC 6803 / Kazusa)).